A 341-amino-acid polypeptide reads, in one-letter code: GDT1-like protein 1, chloroplastic (341 aa).

Residues 1–13 (MASVASSTVFASS) show a composition bias toward low complexity. 2 disordered regions span residues 1–41 (MASV…GRSV) and 54–76 (VVTRASDEEGPPEPAGQGRGGGR). A chloroplast-targeting transit peptide spans 1-57 (MASVASSTVFASSLPHHRATTRAPPTPPRIPRRARLPGRSVVSCLPKRGSEKLVVTR). A run of 7 helical transmembrane segments spans residues 79–99 (PSLDASSCGLALAAAAGVLML), 117–137 (VVGDLGDISTGFASAFLLIFF), 158–178 (AIIFLGTFGALAVMTIISVVL), 203–223 (FLAACLLVYYGVTTLLDAASG), 246–266 (GAGIISAASTIASTFVLVFIA), 286–306 (LGVIAGSLAGHAVATLIAVLG), and 318–338 (IVAYIGGSLFLAFAAVTLVEI).

This sequence belongs to the GDT1 family.

It localises to the plastid. The protein resides in the chloroplast membrane. This is GDT1-like protein 1, chloroplastic from Oryza sativa subsp. indica (Rice).